The primary structure comprises 353 residues: Photosystem II protein D1 (353 aa).

Thr2 bears the N-acetylthreonine mark. Thr2 carries the phosphothreonine modification. A run of 3 helical transmembrane segments spans residues 29–46 (YIGW…TATS), 118–133 (HFLL…EWEL), and 142–156 (WIAV…AATA). Chlorophyll a is bound at residue His118. Tyr126 provides a ligand contact to pheophytin a. [CaMn4O5] cluster is bound by residues Asp170 and Glu189. A helical transmembrane segment spans residues 197–218 (FHMLGVAGVFGGSLFSAMHGSL). Chlorophyll a is bound at residue His198. A quinone-binding positions include His215 and 264-265 (SF). Residue His215 participates in Fe cation binding. His272 is a Fe cation binding site. A helical membrane pass occupies residues 274–288 (FLAAWPVVCIWFTAL). 4 residues coordinate [CaMn4O5] cluster: His332, Glu333, Asp342, and Ala344. Residues 345–353 (SVDAPAVQG) constitute a propeptide that is removed on maturation.

This sequence belongs to the reaction center PufL/M/PsbA/D family. As to quaternary structure, PSII is composed of 1 copy each of membrane proteins PsbA, PsbB, PsbC, PsbD, PsbE, PsbF, PsbH, PsbI, PsbJ, PsbK, PsbL, PsbM, PsbT, PsbX, PsbY, PsbZ, Psb30/Ycf12, at least 3 peripheral proteins of the oxygen-evolving complex and a large number of cofactors. It forms dimeric complexes. It depends on The D1/D2 heterodimer binds P680, chlorophylls that are the primary electron donor of PSII, and subsequent electron acceptors. It shares a non-heme iron and each subunit binds pheophytin, quinone, additional chlorophylls, carotenoids and lipids. D1 provides most of the ligands for the Mn4-Ca-O5 cluster of the oxygen-evolving complex (OEC). There is also a Cl(-1) ion associated with D1 and D2, which is required for oxygen evolution. The PSII complex binds additional chlorophylls, carotenoids and specific lipids. as a cofactor. Tyr-161 forms a radical intermediate that is referred to as redox-active TyrZ, YZ or Y-Z. Post-translationally, C-terminally processed by CTPA; processing is essential to allow assembly of the oxygen-evolving complex and thus photosynthetic growth.

The protein localises to the plastid. It is found in the chloroplast thylakoid membrane. The enzyme catalyses 2 a plastoquinone + 4 hnu + 2 H2O = 2 a plastoquinol + O2. Functionally, photosystem II (PSII) is a light-driven water:plastoquinone oxidoreductase that uses light energy to abstract electrons from H(2)O, generating O(2) and a proton gradient subsequently used for ATP formation. It consists of a core antenna complex that captures photons, and an electron transfer chain that converts photonic excitation into a charge separation. The D1/D2 (PsbA/PsbD) reaction center heterodimer binds P680, the primary electron donor of PSII as well as several subsequent electron acceptors. The chain is Photosystem II protein D1 from Nephroselmis olivacea (Green alga).